The primary structure comprises 170 residues: Alpha-crystallin A chain (170 aa).

Residue Met1 is modified to N-acetylmethionine. Residues 1-63 (MDVTIQQPWF…RTALDSGISE (63 aa)) form a required for complex formation with BFSP1 and BFSP2 region. Gln6 carries the deamidated glutamine; partial modification. Ser45 carries the post-translational modification Phosphoserine. Gln50 is modified (deamidated glutamine; partial). A sHSP domain is found at 52 to 161 (LFRTALDSGI…SERPIPVSRE (110 aa)). N6-acetyllysine is present on residues Lys70 and Lys99. His100 is a Zn(2+) binding site. A Deamidated asparagine; partial modification is found at Asn101. Glu102, His107, and His151 together coordinate Zn(2+). Positions 144-170 (PKIVDPSHSERPIPVSREEKPSSAPSS) are disordered. Over residues 148-164 (DPSHSERPIPVSREEKP) the composition is skewed to basic and acidic residues. Ser159 carries O-linked (GlcNAc) serine glycosylation.

Belongs to the small heat shock protein (HSP20) family. As to quaternary structure, heteromer composed of three CRYAA and one CRYAB subunits. Inter-subunit bridging via zinc ions enhances stability, which is crucial as there is no protein turn over in the lens. Can also form homodimers and homotetramers (dimers of dimers) which serve as the building blocks of homooligomers. Within homooligomers, the zinc-binding motif is created from residues of 3 different molecules. His-100 and Glu-102 from one molecule are ligands of the zinc ion, and His-107 and His-151 residues from additional molecules complete the site with tetrahedral coordination geometry. Part of a complex required for lens intermediate filament formation composed of BFSP1, BFSP2 and CRYAA. Post-translationally, acetylation at Lys-70 may increase chaperone activity. In terms of processing, undergoes age-dependent proteolytical cleavage at the C-terminus.

It localises to the cytoplasm. The protein localises to the nucleus. Functionally, contributes to the transparency and refractive index of the lens. Acts as a chaperone, preventing aggregation of various proteins under a wide range of stress conditions. Required for the correct formation of lens intermediate filaments as part of a complex composed of BFSP1, BFSP2 and CRYAA. The sequence is that of Alpha-crystallin A chain (CRYAA) from Bradypus variegatus (Brown-throated three-fingered sloth).